Consider the following 236-residue polypeptide: Small ribosomal subunit protein uS2c (236 aa).

It belongs to the universal ribosomal protein uS2 family.

The protein resides in the plastid. It is found in the chloroplast. The protein is Small ribosomal subunit protein uS2c (rps2) of Helianthus annuus (Common sunflower).